The following is a 595-amino-acid chain: Metacaspase-1 (595 aa).

Active-site residues include histidine 411 and cysteine 466.

The protein belongs to the peptidase C14B family. As to quaternary structure, monomer.

Activated by Ca(2+). In terms of biological role, cysteine protease that cleaves specifically after arginine or lysine residues. In Plasmodium berghei (strain Anka), this protein is Metacaspase-1.